A 279-amino-acid polypeptide reads, in one-letter code: Tryptophan synthase alpha chain (279 aa).

Catalysis depends on proton acceptor residues Glu-50 and Asp-61.

This sequence belongs to the TrpA family. Tetramer of two alpha and two beta chains.

It catalyses the reaction (1S,2R)-1-C-(indol-3-yl)glycerol 3-phosphate + L-serine = D-glyceraldehyde 3-phosphate + L-tryptophan + H2O. Its pathway is amino-acid biosynthesis; L-tryptophan biosynthesis; L-tryptophan from chorismate: step 5/5. The alpha subunit is responsible for the aldol cleavage of indoleglycerol phosphate to indole and glyceraldehyde 3-phosphate. The protein is Tryptophan synthase alpha chain of Brucella suis (strain ATCC 23445 / NCTC 10510).